The sequence spans 161 residues: UPF0225 protein NTHI0386 (161 aa).

This sequence belongs to the UPF0225 family.

This Haemophilus influenzae (strain 86-028NP) protein is UPF0225 protein NTHI0386.